Consider the following 616-residue polypeptide: D-glutamate cyclase, mitochondrial (616 aa).

The N-terminal 28 residues, 1 to 28 (MPFTLHLRSRLPSAIRSLILQKKPNIRN), are a transit peptide targeting the mitochondrion.

Belongs to the D-glutamate cyclase family.

Its subcellular location is the mitochondrion matrix. The catalysed reaction is D-glutamate = 5-oxo-D-proline + H2O. Its function is as follows. D-glutamate cyclase that converts D-glutamate to 5-oxo-D-proline. The protein is D-glutamate cyclase, mitochondrial of Homo sapiens (Human).